Here is a 621-residue protein sequence, read N- to C-terminus: UvrABC system protein C (621 aa).

The GIY-YIG domain occupies 11 to 90 (TTPGVYLYKD…IKKHRPRYNI (80 aa)). The 36-residue stretch at 200–235 (KELVELLQKDMLYASEALEFEKAATLRDQIQAIKHT) folds into the UVR domain.

Belongs to the UvrC family. Interacts with UvrB in an incision complex.

Its subcellular location is the cytoplasm. Its function is as follows. The UvrABC repair system catalyzes the recognition and processing of DNA lesions. UvrC both incises the 5' and 3' sides of the lesion. The N-terminal half is responsible for the 3' incision and the C-terminal half is responsible for the 5' incision. The chain is UvrABC system protein C from Lawsonia intracellularis (strain PHE/MN1-00).